Reading from the N-terminus, the 916-residue chain is Translation initiation factor IF-2 (916 aa).

Positions 55 to 324 (EPKAVTPTSK…NHNANLKPVT (270 aa)) are disordered. A compositionally biased stretch (low complexity) spans 77–88 (AAEPKAAATKPA). Composition is skewed to basic and acidic residues over residues 98 to 121 (FKAE…ERRN), 129 to 161 (RQKD…DNRN), and 198 to 212 (RQSE…EAKR). Over residues 227 to 250 (KEQPTVEAAATAAPQAQPQTVEQV) the composition is skewed to low complexity. Basic and acidic residues predominate over residues 264–281 (ARPDKSRDFSHENEDGPK). Over residues 291 to 304 (KQNQVRNQKNSNWN) the composition is skewed to low complexity. The span at 305 to 314 (KKNKKSKNNR) shows a compositional bias: basic residues. One can recognise a tr-type G domain in the interval 418–585 (ERAPVVTIMG…TVLLVAEIQE (168 aa)). The G1 stretch occupies residues 427-434 (GHVDHGKT). Residue 427–434 (GHVDHGKT) participates in GTP binding. Positions 452-456 (GITQH) are G2. Positions 473 to 476 (DTPG) are G3. Residues 473-477 (DTPGH) and 527-530 (NKID) contribute to the GTP site. The interval 527 to 530 (NKID) is G4. Residues 563–565 (SAK) are G5.

It belongs to the TRAFAC class translation factor GTPase superfamily. Classic translation factor GTPase family. IF-2 subfamily.

It localises to the cytoplasm. One of the essential components for the initiation of protein synthesis. Protects formylmethionyl-tRNA from spontaneous hydrolysis and promotes its binding to the 30S ribosomal subunits. Also involved in the hydrolysis of GTP during the formation of the 70S ribosomal complex. This chain is Translation initiation factor IF-2, found in Streptococcus mutans serotype c (strain ATCC 700610 / UA159).